We begin with the raw amino-acid sequence, 86 residues long: Large ribosomal subunit protein uL23 (86 aa).

The protein belongs to the universal ribosomal protein uL23 family. As to quaternary structure, part of the 50S ribosomal subunit. Contacts protein L29.

Functionally, binds to 23S rRNA. One of the proteins that surrounds the polypeptide exit tunnel on the outside of the ribosome. This is Large ribosomal subunit protein uL23 from Methanococcus maripaludis (strain C7 / ATCC BAA-1331).